Reading from the N-terminus, the 428-residue chain is MKRGKISSLKGELHIPGDKSISHRSVMFGAMAEGKTVIKNFLPGADCLSTIACFRKMGVEIEQNGSDVTVRGKGLDQLAEPAELLDVGNSGTTIRLMLGILAGRPFHSTVAGDESIAKRPMKRVTEPLRKMGAKIDGRAGGEYTPLSVRGGHLKAIDFQSPVASAQIKSAVLLAGLQAEGTTTVTEPHKSRDHTERMLSMFGVSLREDETSVSIEGGQQLKAAEVFVPGDISSAAFFLAAASLVPGSEVVLRNVGLNPTRTGIIDVLKEMGADLEIEEKDTGNTEPYGDLRIKTSSLKAAEISGDLIPRLIDEIPIIALLATQAEGTTVIKDAAELKVKETNRIDTVASELKKIGANIEPTEDGMKIHGKTPLTGGAKVSSHGDHRIGMMLGIAACICEQPIDILQPEAVSVSYPSFFEHIEKLAEKA.

3-phosphoshikimate contacts are provided by K19, S20, and R24. Residue K19 participates in phosphoenolpyruvate binding. Residues G91 and R119 each coordinate phosphoenolpyruvate. The 3-phosphoshikimate site is built by S164, Q166, D312, and K339. Q166 lines the phosphoenolpyruvate pocket. D312 (proton acceptor) is an active-site residue. 2 residues coordinate phosphoenolpyruvate: R343 and R386.

This sequence belongs to the EPSP synthase family. In terms of assembly, monomer.

It is found in the cytoplasm. It catalyses the reaction 3-phosphoshikimate + phosphoenolpyruvate = 5-O-(1-carboxyvinyl)-3-phosphoshikimate + phosphate. It participates in metabolic intermediate biosynthesis; chorismate biosynthesis; chorismate from D-erythrose 4-phosphate and phosphoenolpyruvate: step 6/7. Catalyzes the transfer of the enolpyruvyl moiety of phosphoenolpyruvate (PEP) to the 5-hydroxyl of shikimate-3-phosphate (S3P) to produce enolpyruvyl shikimate-3-phosphate and inorganic phosphate. The protein is 3-phosphoshikimate 1-carboxyvinyltransferase of Bacillus licheniformis (strain ATCC 14580 / DSM 13 / JCM 2505 / CCUG 7422 / NBRC 12200 / NCIMB 9375 / NCTC 10341 / NRRL NRS-1264 / Gibson 46).